Here is a 922-residue protein sequence, read N- to C-terminus: Pyruvate dehydrogenase E1 component (922 aa).

Homodimer. Part of an unusual ODH/PDH supercomplex, consisting of AceE (E1), AceF (E2), and Lpd (E3) together with OdhA (E1+E2). The cofactor is Mg(2+). Thiamine diphosphate is required as a cofactor.

The catalysed reaction is N(6)-[(R)-lipoyl]-L-lysyl-[protein] + pyruvate + H(+) = N(6)-[(R)-S(8)-acetyldihydrolipoyl]-L-lysyl-[protein] + CO2. Is a specific component of the pyruvate dehydrogenase (PDH) complex, that catalyzes the overall conversion of pyruvate to acetyl-CoA and CO(2). AceE has reductase activity with pyruvate but does not react with 2-oxoglutarate. This chain is Pyruvate dehydrogenase E1 component (aceE), found in Corynebacterium glutamicum (strain ATCC 13032 / DSM 20300 / JCM 1318 / BCRC 11384 / CCUG 27702 / LMG 3730 / NBRC 12168 / NCIMB 10025 / NRRL B-2784 / 534).